The following is a 298-amino-acid chain: Tyrosine recombinase XerC (298 aa).

In terms of domain architecture, Core-binding (CB) spans 2-88 (TDLHTDVERY…ALRSFFDWLV (87 aa)). In terms of domain architecture, Tyr recombinase spans 109-288 (HLPKNIDVDD…DFQHLASVYD (180 aa)). Active-site residues include arginine 148, lysine 172, histidine 240, arginine 243, and histidine 266. The active-site O-(3'-phospho-DNA)-tyrosine intermediate is the tyrosine 275.

The protein belongs to the 'phage' integrase family. XerC subfamily. As to quaternary structure, forms a cyclic heterotetrameric complex composed of two molecules of XerC and two molecules of XerD, in which XerC interacts with XerD via its C-terminal region, XerD interacts with XerC via its C-terminal region and so on.

It localises to the cytoplasm. With respect to regulation, ftsK may regulate the catalytic switch between XerC and XerD in the heterotetrameric complex during the two steps of the recombination process. In terms of biological role, site-specific tyrosine recombinase, which acts by catalyzing the cutting and rejoining of the recombining DNA molecules. Binds cooperatively to specific DNA consensus sequences that are separated from XerD binding sites by a short central region, forming the heterotetrameric XerC-XerD complex that recombines DNA substrates. The complex is essential to convert dimers of the bacterial chromosome into monomers to permit their segregation at cell division. It also contributes to the segregational stability of plasmids. In the complex XerC specifically exchanges the top DNA strands. In Escherichia coli O157:H7, this protein is Tyrosine recombinase XerC.